A 232-amino-acid chain; its full sequence is Large ribosomal subunit protein uL3 (232 aa).

This sequence belongs to the universal ribosomal protein uL3 family. As to quaternary structure, part of the 50S ribosomal subunit. Forms a cluster with proteins L14 and L19.

In terms of biological role, one of the primary rRNA binding proteins, it binds directly near the 3'-end of the 23S rRNA, where it nucleates assembly of the 50S subunit. In Hydrogenobaculum sp. (strain Y04AAS1), this protein is Large ribosomal subunit protein uL3.